The chain runs to 128 residues: Large ribosomal subunit protein bL17 (128 aa).

The protein belongs to the bacterial ribosomal protein bL17 family. Part of the 50S ribosomal subunit. Contacts protein L32.

The polypeptide is Large ribosomal subunit protein bL17 (Streptococcus thermophilus (strain ATCC BAA-250 / LMG 18311)).